The sequence spans 294 residues: Flavin-dependent thymidylate synthase (294 aa).

The ThyX domain occupies 27–250; it reads GFIRVIDYMG…PFVYEAFEEY (224 aa). FAD is bound by residues T73, 96–98, and E104; that span reads RHR. Residues 93–96, 104–108, and R189 contribute to the dUMP site; these read QWIR and EYSAR. Positions 96-106 match the ThyX motif motif; the sequence is RHRTASVNEYS. FAD contacts are provided by residues 205 to 207 and H211; that span reads NLH. R216 lines the dUMP pocket. Residue R216 is the Involved in ionization of N3 of dUMP, leading to its activation of the active site.

The protein belongs to the thymidylate synthase ThyX family. Homotetramer. FAD serves as cofactor.

The catalysed reaction is dUMP + (6R)-5,10-methylene-5,6,7,8-tetrahydrofolate + NADPH + H(+) = dTMP + (6S)-5,6,7,8-tetrahydrofolate + NADP(+). It functions in the pathway pyrimidine metabolism; dTTP biosynthesis. Catalyzes the reductive methylation of 2'-deoxyuridine-5'-monophosphate (dUMP) to 2'-deoxythymidine-5'-monophosphate (dTMP) while utilizing 5,10-methylenetetrahydrofolate (mTHF) as the methyl donor, and NADPH and FADH(2) as the reductant. The polypeptide is Flavin-dependent thymidylate synthase (Rickettsia conorii (strain ATCC VR-613 / Malish 7)).